We begin with the raw amino-acid sequence, 405 residues long: S-adenosylmethionine synthase (405 aa).

141 to 146 (GQGSVD) is an ATP binding site.

The protein belongs to the AdoMet synthase 2 family. It depends on Mg(2+) as a cofactor.

It catalyses the reaction L-methionine + ATP + H2O = S-adenosyl-L-methionine + phosphate + diphosphate. It functions in the pathway amino-acid biosynthesis; S-adenosyl-L-methionine biosynthesis; S-adenosyl-L-methionine from L-methionine: step 1/1. In terms of biological role, catalyzes the formation of S-adenosylmethionine from methionine and ATP. The protein is S-adenosylmethionine synthase of Methanococcus maripaludis (Methanococcus deltae).